A 153-amino-acid polypeptide reads, in one-letter code: ATP synthase subunit b' (153 aa).

A helical membrane pass occupies residues 23–40; the sequence is LMAIQVVALTYILNSLFF.

The protein belongs to the ATPase B chain family. As to quaternary structure, F-type ATPases have 2 components, F(1) - the catalytic core - and F(0) - the membrane proton channel. F(1) has five subunits: alpha(3), beta(3), gamma(1), delta(1), epsilon(1). F(0) has four main subunits: a(1), b(1), b'(1) and c(10-14). The alpha and beta chains form an alternating ring which encloses part of the gamma chain. F(1) is attached to F(0) by a central stalk formed by the gamma and epsilon chains, while a peripheral stalk is formed by the delta, b and b' chains.

Its subcellular location is the cellular thylakoid membrane. Its function is as follows. F(1)F(0) ATP synthase produces ATP from ADP in the presence of a proton or sodium gradient. F-type ATPases consist of two structural domains, F(1) containing the extramembraneous catalytic core and F(0) containing the membrane proton channel, linked together by a central stalk and a peripheral stalk. During catalysis, ATP synthesis in the catalytic domain of F(1) is coupled via a rotary mechanism of the central stalk subunits to proton translocation. In terms of biological role, component of the F(0) channel, it forms part of the peripheral stalk, linking F(1) to F(0). The b'-subunit is a diverged and duplicated form of b found in plants and photosynthetic bacteria. The protein is ATP synthase subunit b' of Prochlorococcus marinus (strain MIT 9312).